The sequence spans 123 residues: MAVTKEDVIDFIAGMSVLELSELIGEFEEKFGVSAAAPVAVAAAGVAAEAVEEKTEFDVILASAGSEKIKVIKEVRAITGLGLKEAKSLVESAPAALKEGVSKDEAAELKAKLEAVGATAEVK.

It belongs to the bacterial ribosomal protein bL12 family. As to quaternary structure, homodimer. Part of the ribosomal stalk of the 50S ribosomal subunit. Forms a multimeric L10(L12)X complex, where L10 forms an elongated spine to which 2 to 4 L12 dimers bind in a sequential fashion. Binds GTP-bound translation factors.

In terms of biological role, forms part of the ribosomal stalk which helps the ribosome interact with GTP-bound translation factors. Is thus essential for accurate translation. This Desulfotalea psychrophila (strain LSv54 / DSM 12343) protein is Large ribosomal subunit protein bL12.